The primary structure comprises 288 residues: Galactose/N-acetyl-D-galactosamine lectin light subunit 1 (288 aa).

The first 15 residues, 1–15 (MIILVLLISYSFGKT), serve as a signal peptide directing secretion. Asn205 and Asn261 each carry an N-linked (GlcNAc...) asparagine glycan.

In terms of assembly, heterodimer composed of a 170 kDa heavy subunit (hgl) and a 31/35 kDa light subunit (lgl); disulfide-linked.

It is found in the cell membrane. Light subunit of a heterodimeric lectin; the heavy subunit binds galactose and N-acetyl-D-galactosamine of host glycoproteins and thus mediates adhesion to host cells. This Entamoeba histolytica (strain ATCC 30459 / HM-1:IMSS / ABRM) protein is Galactose/N-acetyl-D-galactosamine lectin light subunit 1.